The sequence spans 178 residues: Large ribosomal subunit protein uL6 (178 aa).

Belongs to the universal ribosomal protein uL6 family. As to quaternary structure, part of the 50S ribosomal subunit.

Functionally, this protein binds to the 23S rRNA, and is important in its secondary structure. It is located near the subunit interface in the base of the L7/L12 stalk, and near the tRNA binding site of the peptidyltransferase center. The chain is Large ribosomal subunit protein uL6 from Francisella tularensis subsp. mediasiatica (strain FSC147).